Here is a 321-residue protein sequence, read N- to C-terminus: tRNA U34 carboxymethyltransferase (321 aa).

Residues Lys90, Trp104, Lys109, Gly129, Asp151–Thr153, Ile180–Glu181, Met195, Tyr199, and Arg314 each bind carboxy-S-adenosyl-L-methionine.

It belongs to the class I-like SAM-binding methyltransferase superfamily. CmoB family. As to quaternary structure, homotetramer.

The enzyme catalyses carboxy-S-adenosyl-L-methionine + 5-hydroxyuridine(34) in tRNA = 5-carboxymethoxyuridine(34) in tRNA + S-adenosyl-L-homocysteine + H(+). In terms of biological role, catalyzes carboxymethyl transfer from carboxy-S-adenosyl-L-methionine (Cx-SAM) to 5-hydroxyuridine (ho5U) to form 5-carboxymethoxyuridine (cmo5U) at position 34 in tRNAs. This chain is tRNA U34 carboxymethyltransferase, found in Haemophilus influenzae (strain PittEE).